We begin with the raw amino-acid sequence, 507 residues long: uncharacterized protein (507 aa).

12 consecutive transmembrane segments (helical) span residues 11-31 (ILCFFLWQFGLFYACQLIFPI), 97-117 (AWIATIQFIGALVGALVYGHL), 125-145 (PVSFVGISIGIIFGVASGFAP), 149-169 (VFAVLLFICGTSVACIMIVFY), 187-207 (FFNWGYARLVFTLVCFICGYW), 209-229 (SAAIATSLLALPILPVLLWLP), 283-303 (LFSSWPIAYSTIVVGSLWFST), 326-346 (FVQAAAIALSKLSIFLLDLFI), 354-374 (LHQVPQIIMIACYTTIMALMI), 388-408 (LAIIIINIIGTSFIELTWDAC), 423-443 (IGIGTCSLLARIGALLAPQMA), and 452-472 (IPYIIVCSIGIISLLISCFFL).

Belongs to the major facilitator superfamily.

It localises to the membrane. This is an uncharacterized protein from Caenorhabditis elegans.